A 437-amino-acid chain; its full sequence is tRNA(Ile2) 2-agmatinylcytidine synthetase TiaS (437 aa).

The protein belongs to the TiaS family.

The protein resides in the cytoplasm. It catalyses the reaction cytidine(34) in tRNA(Ile2) + agmatine + ATP + H2O = 2-agmatinylcytidine(34) in tRNA(Ile2) + AMP + 2 phosphate + 2 H(+). ATP-dependent agmatine transferase that catalyzes the formation of 2-agmatinylcytidine (agm2C) at the wobble position (C34) of tRNA(Ile2), converting the codon specificity from AUG to AUA. This chain is tRNA(Ile2) 2-agmatinylcytidine synthetase TiaS, found in Acidilobus saccharovorans (strain DSM 16705 / JCM 18335 / VKM B-2471 / 345-15).